A 90-amino-acid chain; its full sequence is Sec-independent protein translocase protein TatA (90 aa).

Residues 1-21 (MGSMSIWHWVIVAVIVMLLFG) traverse the membrane as a helical segment. The disordered stretch occupies residues 44–90 (AEDETPPAVQAAPPPAEPVRTIPHATETSPGTAIPASHLPGGERKPV).

This sequence belongs to the TatA/E family. As to quaternary structure, the Tat system comprises two distinct complexes: a TatABC complex, containing multiple copies of TatA, TatB and TatC subunits, and a separate TatA complex, containing only TatA subunits. Substrates initially bind to the TatABC complex, which probably triggers association of the separate TatA complex to form the active translocon.

It localises to the cell inner membrane. In terms of biological role, part of the twin-arginine translocation (Tat) system that transports large folded proteins containing a characteristic twin-arginine motif in their signal peptide across membranes. TatA could form the protein-conducting channel of the Tat system. The protein is Sec-independent protein translocase protein TatA of Methylobacterium radiotolerans (strain ATCC 27329 / DSM 1819 / JCM 2831 / NBRC 15690 / NCIMB 10815 / 0-1).